The following is an 85-amino-acid chain: Toxin To9 (85 aa).

The N-terminal stretch at 1 to 19 is a signal peptide; the sequence is MNYSTLIAVASLLTAGTES. In terms of domain architecture, LCN-type CS-alpha/beta spans 21–81; the sequence is KDGYPVKEGD…AAIKGYGRCR (61 aa). 4 cysteine pairs are disulfide-bonded: Cys31-Cys80, Cys35-Cys56, Cys42-Cys63, and Cys46-Cys65. Pro82 bears the Proline amide mark.

The protein belongs to the long (4 C-C) scorpion toxin superfamily. Sodium channel inhibitor family. Alpha subfamily. In terms of tissue distribution, expressed by the venom gland.

It is found in the secreted. In terms of biological role, alpha toxins bind voltage-independently at site-3 of sodium channels (Nav) and inhibit the inactivation of the activated channels, thereby blocking neuronal transmission. The chain is Toxin To9 from Tityus obscurus (Amazonian scorpion).